We begin with the raw amino-acid sequence, 62 residues long: Large ribosomal subunit protein uL29 (62 aa).

It belongs to the universal ribosomal protein uL29 family.

The protein is Large ribosomal subunit protein uL29 of Ruthia magnifica subsp. Calyptogena magnifica.